The primary structure comprises 41 residues: Pi-stichotoxin-Hcr5a (41 aa).

3 disulfides stabilise this stretch: C4–C37, C6–C30, and C20–C38.

The protein belongs to the sea anemone type 3 (BDS) potassium channel toxin family.

It localises to the secreted. The protein localises to the nematocyst. Weakly inhibits human homomeric ASIC3 (IC(50)=5.5 uM). The chain is Pi-stichotoxin-Hcr5a from Radianthus crispa (Leathery sea anemone).